Consider the following 707-residue polypeptide: Serine/threonine protein kinase UL97 (707 aa).

A compositionally biased stretch (low complexity) spans Met1–Leu14. 4 disordered regions span residues Met1–Ala32, Glu115–Tyr146, Phe176–Pro199, and Glu231–Ser264. A compositionally biased stretch (basic and acidic residues) spans Glu115–Arg127. The span at Gly178–Gly188 shows a compositional bias: low complexity. ATP-binding positions include Leu337–Val345 and Lys359. Residue Asp456 is the Proton acceptor of the active site.

It belongs to the protein kinase superfamily. Tyr protein kinase family. HCMV ganciclovir subfamily. As to quaternary structure, interacts with UL83. In terms of processing, autophosphorylates on serine and threonine residues.

The protein resides in the virion. The enzyme catalyses L-seryl-[protein] + ATP = O-phospho-L-seryl-[protein] + ADP + H(+). It carries out the reaction L-threonyl-[protein] + ATP = O-phospho-L-threonyl-[protein] + ADP + H(+). Serine/threonine protein kinase that plays important roles in several processes including nuclear viral egress, viral replication or regulation of host cell cycle progression. Participates in the acquisition of tegument during virion morphogenesis in the nucleus. Redistributes the host nuclear lamina by phosphorylating cellular Lamins-A/C. Plays a role in viral DNA synthesis by phosphorylating the DNA polymerase processivity factor UL44. Stimulates host cell cycle to support viral DNA synthesis by phosphorylating host retinoblastoma/RB1 protein. Additional substrates have been identified including host EF1D or H2B. Also phosphorylates host SAMHD1 and thereby counteracts its antiviral effect by reducing its dNTP hydrolase activity. This chain is Serine/threonine protein kinase UL97 (UL97), found in Human cytomegalovirus (strain Towne) (HHV-5).